The chain runs to 171 residues: Dual-action ribosomal maturation protein DarP (171 aa).

A disordered region spans residues 1–30 (MPKRPAENPEQSDDFVSKSQKKREMAERQE).

The protein belongs to the DarP family.

It localises to the cytoplasm. In terms of biological role, member of a network of 50S ribosomal subunit biogenesis factors which assembles along the 30S-50S interface, preventing incorrect 23S rRNA structures from forming. Promotes peptidyl transferase center (PTC) maturation. This chain is Dual-action ribosomal maturation protein DarP, found in Idiomarina loihiensis (strain ATCC BAA-735 / DSM 15497 / L2-TR).